Here is a 366-residue protein sequence, read N- to C-terminus: tRNA/tmRNA (uracil-C(5))-methyltransferase (366 aa).

Glutamine 190, tyrosine 218, asparagine 223, glutamate 239, and aspartate 299 together coordinate S-adenosyl-L-methionine. Cysteine 324 (nucleophile) is an active-site residue. Glutamate 358 acts as the Proton acceptor in catalysis.

This sequence belongs to the class I-like SAM-binding methyltransferase superfamily. RNA M5U methyltransferase family. TrmA subfamily.

It catalyses the reaction uridine(54) in tRNA + S-adenosyl-L-methionine = 5-methyluridine(54) in tRNA + S-adenosyl-L-homocysteine + H(+). The enzyme catalyses uridine(341) in tmRNA + S-adenosyl-L-methionine = 5-methyluridine(341) in tmRNA + S-adenosyl-L-homocysteine + H(+). Dual-specificity methyltransferase that catalyzes the formation of 5-methyluridine at position 54 (m5U54) in all tRNAs, and that of position 341 (m5U341) in tmRNA (transfer-mRNA). The polypeptide is tRNA/tmRNA (uracil-C(5))-methyltransferase (Cellvibrio japonicus (strain Ueda107) (Pseudomonas fluorescens subsp. cellulosa)).